The primary structure comprises 502 residues: Glycerol kinase (502 aa).

T13 is an ADP binding site. 3 residues coordinate ATP: T13, T14, and S15. Residue T13 coordinates sn-glycerol 3-phosphate. Residue R17 participates in ADP binding. Sn-glycerol 3-phosphate is bound by residues R83, E84, Y136, and D246. The glycerol site is built by R83, E84, Y136, D246, and Q247. ADP is bound by residues T268 and G311. T268, G311, Q315, and G412 together coordinate ATP. ADP contacts are provided by G412 and N416.

It belongs to the FGGY kinase family.

It catalyses the reaction glycerol + ATP = sn-glycerol 3-phosphate + ADP + H(+). Its pathway is polyol metabolism; glycerol degradation via glycerol kinase pathway; sn-glycerol 3-phosphate from glycerol: step 1/1. With respect to regulation, inhibited by fructose 1,6-bisphosphate (FBP). Its function is as follows. Key enzyme in the regulation of glycerol uptake and metabolism. Catalyzes the phosphorylation of glycerol to yield sn-glycerol 3-phosphate. The polypeptide is Glycerol kinase (Francisella tularensis subsp. tularensis (strain WY96-3418)).